The sequence spans 185 residues: Elongation factor P (185 aa).

The protein belongs to the elongation factor P family.

The protein resides in the cytoplasm. The protein operates within protein biosynthesis; polypeptide chain elongation. Involved in peptide bond synthesis. Stimulates efficient translation and peptide-bond synthesis on native or reconstituted 70S ribosomes in vitro. Probably functions indirectly by altering the affinity of the ribosome for aminoacyl-tRNA, thus increasing their reactivity as acceptors for peptidyl transferase. In Burkholderia ambifaria (strain MC40-6), this protein is Elongation factor P.